The primary structure comprises 225 residues: NAD(P)H-quinone oxidoreductase subunit K, chloroplastic (225 aa).

Residues cysteine 43, cysteine 44, cysteine 108, and cysteine 139 each contribute to the [4Fe-4S] cluster site.

The protein belongs to the complex I 20 kDa subunit family. As to quaternary structure, NDH is composed of at least 16 different subunits, 5 of which are encoded in the nucleus. It depends on [4Fe-4S] cluster as a cofactor.

Its subcellular location is the plastid. The protein resides in the chloroplast thylakoid membrane. The enzyme catalyses a plastoquinone + NADH + (n+1) H(+)(in) = a plastoquinol + NAD(+) + n H(+)(out). It carries out the reaction a plastoquinone + NADPH + (n+1) H(+)(in) = a plastoquinol + NADP(+) + n H(+)(out). NDH shuttles electrons from NAD(P)H:plastoquinone, via FMN and iron-sulfur (Fe-S) centers, to quinones in the photosynthetic chain and possibly in a chloroplast respiratory chain. The immediate electron acceptor for the enzyme in this species is believed to be plastoquinone. Couples the redox reaction to proton translocation, and thus conserves the redox energy in a proton gradient. In Agrostis stolonifera (Creeping bentgrass), this protein is NAD(P)H-quinone oxidoreductase subunit K, chloroplastic.